An 863-amino-acid polypeptide reads, in one-letter code: Nitrate reductase [NADH] (863 aa).

Cys137 lines the Mo-molybdopterin pocket. Residues 484-559 enclose the Cytochrome b5 heme-binding domain; the sequence is KKYVTKAMLE…LEQFYIAELA (76 aa). Positions 519 and 542 each coordinate heme. The FAD-binding FR-type domain maps to 602–719; that stretch reads KKQKAAELKE…KGPIGHFHYD (118 aa). Residues 659–662, 676–680, Phe688, 693–695, and Thr746 each bind FAD; these read RAYT, VVKIY, and KFS.

It belongs to the nitrate reductase family. In terms of assembly, homodimer. FAD serves as cofactor. It depends on Mo-molybdopterin as a cofactor. Requires heme as cofactor.

The catalysed reaction is nitrite + NAD(+) + H2O = nitrate + NADH + H(+). In terms of biological role, nitrate reductase is a key enzyme involved in the first step of nitrate assimilation in plants, fungi and bacteria. This chain is Nitrate reductase [NADH], found in Ulva prolifera (Green seaweed).